A 232-amino-acid chain; its full sequence is MERCPSLGVTLYALVVVLGLRATPAGGQHYLHIRPAPSDNLPLVDLIEHPDPIFDPKEKDLNETLLRSLLGGHYDPGFMATSPPEDRPGGGGGAAGGAEDLAELDQLLRQRPSGAMPSEIKGLEFSEGLAQGKKQRLSKKLRRKLQMWLWSQTFCPVLYAWNDLGSRFWPRYVKVGSCFSKRSCSVPEGMVCKPSKSVHLTVLRWRCQRRGGQRCGWIPIQYPIISECKCSC.

Positions 1–27 (MERCPSLGVTLYALVVVLGLRATPAGG) are cleaved as a signal peptide. Asparagine 62 carries N-linked (GlcNAc...) asparagine glycosylation. The tract at residues 77–96 (GFMATSPPEDRPGGGGGAAG) is disordered. Cystine bridges form between cysteine 155-cysteine 192, cysteine 178-cysteine 228, cysteine 184-cysteine 230, and cysteine 207-cysteine 215.

The protein belongs to the noggin family. Homodimer. Interacts with GDF5; inhibits chondrocyte differentiation.

The protein resides in the secreted. Its function is as follows. Inhibitor of bone morphogenetic proteins (BMP) signaling which is required for growth and patterning of the neural tube and somite. Essential for cartilage morphogenesis and joint formation. Inhibits chondrocyte differentiation through its interaction with GDF5 and, probably, GDF6. The chain is Noggin (NOG) from Homo sapiens (Human).